We begin with the raw amino-acid sequence, 248 residues long: 3-deoxy-manno-octulosonate cytidylyltransferase (248 aa).

This sequence belongs to the KdsB family.

It is found in the cytoplasm. The enzyme catalyses 3-deoxy-alpha-D-manno-oct-2-ulosonate + CTP = CMP-3-deoxy-beta-D-manno-octulosonate + diphosphate. The protein operates within nucleotide-sugar biosynthesis; CMP-3-deoxy-D-manno-octulosonate biosynthesis; CMP-3-deoxy-D-manno-octulosonate from 3-deoxy-D-manno-octulosonate and CTP: step 1/1. It participates in bacterial outer membrane biogenesis; lipopolysaccharide biosynthesis. Functionally, activates KDO (a required 8-carbon sugar) for incorporation into bacterial lipopolysaccharide in Gram-negative bacteria. This is 3-deoxy-manno-octulosonate cytidylyltransferase from Citrobacter koseri (strain ATCC BAA-895 / CDC 4225-83 / SGSC4696).